The sequence spans 300 residues: MSTGNAAIRGAEHFGTVSVAMVTPFHKDGTIDLKAGVELAGYLVDKGCDSLVLAGTTGESPTTTNEEKINLLKAVRAELGDSVKLIAGTGTNNTASTIELSRLSQDAGADSLLVVTPYYSRPSQEGLFQHFTAVADSVDLPICLYDIPSRSVVPIELDTIQRLSEHENIQAVKDAKGKLPEALQLLQNTDLAWYSGDDPLNLPFLSVGATGFISVIGHLAADRLRALRDAYDQGDLAGAQQIAASLAPLERAQGRLGGVTMVKAALKLRGKDVGAPRLPILEVDPAELDQLEQDLQDAGV.

Residue Thr57 coordinates pyruvate. Tyr145 (proton donor/acceptor) is an active-site residue. The active-site Schiff-base intermediate with substrate is Lys173. Ile213 contributes to the pyruvate binding site.

It belongs to the DapA family. As to quaternary structure, homotetramer; dimer of dimers.

The protein resides in the cytoplasm. It catalyses the reaction L-aspartate 4-semialdehyde + pyruvate = (2S,4S)-4-hydroxy-2,3,4,5-tetrahydrodipicolinate + H2O + H(+). It participates in amino-acid biosynthesis; L-lysine biosynthesis via DAP pathway; (S)-tetrahydrodipicolinate from L-aspartate: step 3/4. In terms of biological role, catalyzes the condensation of (S)-aspartate-beta-semialdehyde [(S)-ASA] and pyruvate to 4-hydroxy-tetrahydrodipicolinate (HTPA). The sequence is that of 4-hydroxy-tetrahydrodipicolinate synthase from Corynebacterium urealyticum (strain ATCC 43042 / DSM 7109).